The sequence spans 92 residues: MKLCVTVLSLLVLVAAFCSPALSAPMGSDPPTACCFSYTLRKIPRNFVADYFETSSLCSQPAVVFQTRRGRQVCANPSEPWVQEYMDDLELN.

An N-terminal signal peptide occupies residues 1-23 (MKLCVTVLSLLVLVAAFCSPALS). Cystine bridges form between C34-C58 and C35-C74.

This sequence belongs to the intercrine beta (chemokine CC) family. In terms of assembly, homodimer. Interacts with CCR5.

It localises to the secreted. Monokine with inflammatory and chemokinetic properties. The sequence is that of C-C motif chemokine 4 (CCL4) from Canis lupus familiaris (Dog).